We begin with the raw amino-acid sequence, 161 residues long: Nucleotide-binding protein RC1_3464 (161 aa).

Belongs to the YajQ family.

In terms of biological role, nucleotide-binding protein. The protein is Nucleotide-binding protein RC1_3464 of Rhodospirillum centenum (strain ATCC 51521 / SW).